A 29-amino-acid polypeptide reads, in one-letter code: 28 kDa protein (29 aa).

The protein is 28 kDa protein of Tritrichomonas foetus (Trichomonas foetus).